A 195-amino-acid chain; its full sequence is ATP-dependent Clp protease proteolytic subunit (195 aa).

The Nucleophile role is filled by serine 101. Residue histidine 126 is part of the active site.

The protein belongs to the peptidase S14 family.

The protein resides in the plastid. It is found in the chloroplast stroma. The enzyme catalyses Hydrolysis of proteins to small peptides in the presence of ATP and magnesium. alpha-casein is the usual test substrate. In the absence of ATP, only oligopeptides shorter than five residues are hydrolyzed (such as succinyl-Leu-Tyr-|-NHMec, and Leu-Tyr-Leu-|-Tyr-Trp, in which cleavage of the -Tyr-|-Leu- and -Tyr-|-Trp bonds also occurs).. Cleaves peptides in various proteins in a process that requires ATP hydrolysis. Has a chymotrypsin-like activity. Plays a major role in the degradation of misfolded proteins. The polypeptide is ATP-dependent Clp protease proteolytic subunit (Bigelowiella natans (Pedinomonas minutissima)).